The following is a 248-amino-acid chain: Granulin (248 aa).

Belongs to the polyhedrin family.

In terms of biological role, component of the virus occlusion bodies, which are large proteinaceous structures, that protect the virus from the outside environment for extended periods until they are ingested by insect larvae. In Xestia c-nigrum granulosis virus (XnGV), this protein is Granulin.